The chain runs to 188 residues: Peptidyl-prolyl cis-trans isomerase (188 aa).

Positions 1-20 (MLKRVAIVLGGLLISAHALA) are cleaved as a signal peptide. Residues 21 to 181 (NTMVEMKTNL…QPVKIISVQI (161 aa)) enclose the PPIase cyclophilin-type domain.

Belongs to the cyclophilin-type PPIase family.

It localises to the periplasm. It catalyses the reaction [protein]-peptidylproline (omega=180) = [protein]-peptidylproline (omega=0). Its function is as follows. PPIases accelerate the folding of proteins. It catalyzes the cis-trans isomerization of proline imidic peptide bonds in oligopeptides. This protein is not essential for growth. Presumably plays a role in signal transduction. The sequence is that of Peptidyl-prolyl cis-trans isomerase (rotA) from Acinetobacter baylyi (strain ATCC 33305 / BD413 / ADP1).